Consider the following 535-residue polypeptide: Dimethylaniline monooxygenase [N-oxide-forming] 2 (535 aa).

Residue Ala-2 is modified to N-acetylalanine. FAD contacts are provided by residues 9 to 13 (GAGVS), Glu-32, 40 to 41 (VW), and 61 to 62 (NT). NADP(+) contacts are provided by residues 60 to 61 (TN) and 195 to 198 (SGSD). Lys-492 participates in a covalent cross-link: Glycyl lysine isopeptide (Lys-Gly) (interchain with G-Cter in SUMO). Residues 510–530 (FSVSFLLKILGLLAVVVAFFC) form a helical membrane-spanning segment.

It belongs to the FMO family. It depends on FAD as a cofactor. The cofactor is Mg(2+).

The protein localises to the microsome membrane. The protein resides in the endoplasmic reticulum membrane. Its function is as follows. Catalyzes the oxidative metabolism of numerous xenobiotics, including mainly therapeutic drugs and insecticides that contain a soft nucleophile, most commonly nitrogen and sulfur and participates to their bioactivation. The protein is Dimethylaniline monooxygenase [N-oxide-forming] 2 of Pan troglodytes (Chimpanzee).